A 689-amino-acid chain; its full sequence is Probable serine/threonine-protein kinase abkC (689 aa).

The segment at 42–79 is disordered; the sequence is NNSGNENYKNFNYNYKNKNNYNNNNNNNNSNSSSNNNG. Positions 257-689 constitute a Protein kinase domain; the sequence is WFDEEPMASG…NNKNNNEKNK (433 aa). ATP-binding positions include 263–271 and Lys-285; that span reads MASGSVAQV. The Proton acceptor role is filled by Asp-417. The segment at 652–689 is disordered; it reads KQLNNDNNNNNNNNNNNKNNNDNNNKNNNNKNNNEKNK. Residues 655–683 are compositionally biased toward low complexity; that stretch reads NNDNNNNNNNNNNNKNNNDNNNKNNNNKN.

The protein belongs to the protein kinase superfamily. ADCK protein kinase family.

This is Probable serine/threonine-protein kinase abkC (abkC) from Dictyostelium discoideum (Social amoeba).